Reading from the N-terminus, the 1715-residue chain is Sodium channel protein type 4 subunit alpha B (1715 aa).

Residues Met-1–Ser-126 are Cytoplasmic-facing. The stretch at Leu-108 to Asn-431 is one I repeat. A helical membrane pass occupies residues Leu-127–Leu-145. At Ser-146–Ser-152 the chain is on the extracellular side. The helical transmembrane segment at Lys-153–Ser-173 threads the bilayer. At Arg-174–Pro-187 the chain is on the cytoplasmic side. A helical membrane pass occupies residues Trp-188 to Val-205. The Extracellular portion of the chain corresponds to Asp-206–Ser-211. The N-linked (GlcNAc...) asparagine glycan is linked to Asn-209. A helical membrane pass occupies residues Val-212 to Ile-228. Over Pro-229–Asp-247 the chain is Cytoplasmic. Residues Ala-248–Phe-267 form a helical membrane-spanning segment. Residues Met-268–Ser-368 lie on the Extracellular side of the membrane. A disulfide bridge links Cys-275 with Cys-337. N-linked (GlcNAc...) asparagine glycosylation is found at Asn-284, Asn-304, and Asn-339. An intrachain disulfide couples Cys-346 to Cys-352. The segment at residues Phe-369–Leu-393 is an intramembrane region (pore-forming). The Extracellular segment spans residues Arg-394 to Tyr-400. The chain crosses the membrane as a helical span at residues Met-401–Ala-421. The Cytoplasmic segment spans residues Val-422–Pro-515. An II repeat occupies Cys-497–Ala-768. A helical transmembrane segment spans residues Phe-516–Met-534. Residues Glu-535 to Glu-545 lie on the Extracellular side of the membrane. A helical transmembrane segment spans residues Leu-546–Lys-565. Residues Ile-566–Trp-579 lie on the Cytoplasmic side of the membrane. A helical membrane pass occupies residues Asn-580–Val-599. Residues Gln-600 to Gly-601 lie on the Extracellular side of the membrane. A helical transmembrane segment spans residues Leu-602–Ser-619. Topologically, residues Trp-620 to Gly-635 are cytoplasmic. The helical transmembrane segment at Ala-636–Val-654 threads the bilayer. Residues Gly-655 to Asp-683 lie on the Extracellular side of the membrane. Residues Cys-668 and Cys-674 are joined by a disulfide bond. The segment at residues Phe-684 to Trp-704 is an intramembrane region (pore-forming). The Extracellular segment spans residues Asp-705 to Cys-715. Cys-706 and Cys-715 are joined by a disulfide. The chain crosses the membrane as a helical span at residues Leu-716 to Phe-734. Residues Leu-735–Tyr-915 lie on the Cytoplasmic side of the membrane. A disordered region spans residues Glu-824–Asp-865. Residues Ala-825–Asp-838 show a composition bias toward acidic residues. An III repeat occupies Lys-896–Leu-1211. Residues Phe-916–Phe-933 form a helical membrane-spanning segment. The Extracellular segment spans residues Glu-934–Thr-946. Residues Ile-947–Leu-965 traverse the membrane as a helical segment. Topologically, residues Lys-966–Ala-979 are cytoplasmic. Residues Trp-980–Asn-998 traverse the membrane as a helical segment. The Extracellular portion of the chain corresponds to Ile-999–Gly-1006. The helical transmembrane segment at Ala-1007 to Arg-1025 threads the bilayer. Topologically, residues Phe-1026 to Ser-1042 are cytoplasmic. A helical membrane pass occupies residues Ile-1043 to Val-1062. The Extracellular portion of the chain corresponds to Asn-1063 to Val-1115. A disulfide bridge connects residues Cys-1072 and Cys-1092. N-linked (GlcNAc...) asparagine glycans are attached at residues Asn-1074 and Asn-1088. Residues Gly-1116 to Ala-1137 constitute an intramembrane region (pore-forming). The Extracellular portion of the chain corresponds to Ala-1138–Ile-1154. Residues Tyr-1155 to Ile-1176 traverse the membrane as a helical segment. Over Gly-1177–Ile-1239 the chain is Cytoplasmic. The segment at Ile-1195–Met-1197 is important for rapid channel inactivation. The IV repeat unit spans residues Val-1220–Gln-1517. The chain crosses the membrane as a helical span at residues Phe-1240–Val-1257. Residues Glu-1258–Asp-1268 are Extracellular-facing. The helical transmembrane segment at Ile-1269–Leu-1287 threads the bilayer. The Cytoplasmic segment spans residues Lys-1288–Ile-1299. The helical transmembrane segment at Gly-1300–Leu-1317 threads the bilayer. The Extracellular portion of the chain corresponds to Leu-1318–Thr-1330. Residues Leu-1331–Ile-1347 form a helical membrane-spanning segment. The Cytoplasmic segment spans residues Arg-1348–Ala-1366. The helical transmembrane segment at Leu-1367–Phe-1384 threads the bilayer. At Gly-1385 to Thr-1406 the chain is on the extracellular side. The segment at residues Phe-1407–Pro-1429 is an intramembrane region (pore-forming). Over Ile-1430 to Gly-1458 the chain is Extracellular. A disulfide bridge links Cys-1437 with Cys-1452. Residues Ile-1459–Ile-1481 form a helical membrane-spanning segment. Topologically, residues Leu-1482–Val-1715 are cytoplasmic. The IQ domain maps to Glu-1611–Glu-1640.

Belongs to the sodium channel (TC 1.A.1.10) family. Nav1.4/SCN4A subfamily. In terms of assembly, voltage-gated sodium (Nav) channels consist of an ion-conducting alpha subunit which is functional on its own associated with regulatory beta subunits.

The protein localises to the cell membrane. It carries out the reaction Na(+)(in) = Na(+)(out). In terms of biological role, pore-forming subunit of a voltage-gated sodium (Nav) channel that directly mediates the depolarizing phase of action potentials in excitable membranes. Navs, also called VGSCs (voltage-gated sodium channels) or VDSCs (voltage-dependent sodium channels), operate by switching between closed and open conformations depending on the voltage difference across the membrane. In the open conformation they allow Na(+) ions to selectively pass through the pore, along their electrochemical gradient. The influx of Na+ ions provokes membrane depolarization, initiating the propagation of electrical signals throughout cells and tissues. This is Sodium channel protein type 4 subunit alpha B (scn4ab) from Tetraodon nigroviridis (Spotted green pufferfish).